A 173-amino-acid chain; its full sequence is Probable calcium-binding protein CML14 (173 aa).

4 consecutive EF-hand domains span residues Ser-21 to Arg-56, Pro-57 to Thr-92, Val-97 to Pro-132, and Leu-133 to Asp-168. Residues Asp-34, Asn-36, Asp-38, Ser-40, Glu-45, Asp-70, Asn-72, Asn-74, Ser-76, Glu-81, Asp-110, Asp-112, Asn-114, Glu-121, Asp-146, Asp-148, Asp-150, and Glu-157 each contribute to the Ca(2+) site.

Its function is as follows. Potential calcium sensor. This Oryza sativa subsp. japonica (Rice) protein is Probable calcium-binding protein CML14 (CML14).